We begin with the raw amino-acid sequence, 345 residues long: Phosphoribosylformylglycinamidine cyclo-ligase (345 aa).

The protein belongs to the AIR synthase family.

It is found in the cytoplasm. It catalyses the reaction 2-formamido-N(1)-(5-O-phospho-beta-D-ribosyl)acetamidine + ATP = 5-amino-1-(5-phospho-beta-D-ribosyl)imidazole + ADP + phosphate + H(+). It functions in the pathway purine metabolism; IMP biosynthesis via de novo pathway; 5-amino-1-(5-phospho-D-ribosyl)imidazole from N(2)-formyl-N(1)-(5-phospho-D-ribosyl)glycinamide: step 2/2. In Shewanella sediminis (strain HAW-EB3), this protein is Phosphoribosylformylglycinamidine cyclo-ligase.